The sequence spans 677 residues: Amine oxidase [copper-containing] alpha 2, peroxisomal (677 aa).

320–331 (YLDCGEFGCGQT) is a binding site for substrate. Asp-322 acts as the Proton acceptor in catalysis. Cys-341 and Cys-367 are joined by a disulfide. Position 407–412 (407–412 (VGNYDY)) interacts with substrate. The Schiff-base intermediate with substrate; via topaquinone role is filled by Tyr-410. Tyr-410 carries the 2',4',5'-topaquinone modification. The Cu cation site is built by His-466 and His-468. 3 residues coordinate Mn(2+): Asp-477, Asp-617, and Ile-618. Residue His-628 participates in Cu cation binding.

The protein belongs to the copper/topaquinone oxidase family. As to quaternary structure, homodimer. Cu cation is required as a cofactor. Zn(2+) serves as cofactor. The cofactor is L-topaquinone. Post-translationally, topaquinone (TPQ) is generated by copper-dependent autoxidation of a specific tyrosyl residue. As to expression, expressed exclusively in leaves.

It localises to the peroxisome. The catalysed reaction is a primary methyl amine + O2 + H2O = an aldehyde + H2O2 + NH4(+). The protein operates within amine and polyamine degradation; putrescine degradation. In terms of biological role, copper amine oxidase that can use putrescine and spermidine as substrates. Involved in putrescine catabolism in peroxisomes in response to salt stress. Regulates arginine-dependent nitric oxide (NO) production, a key signaling molecule regulating a wide range of physiological processes including responses to salt stress, by influencing arginine bioavailability. Modulates primary root growth. In Arabidopsis thaliana (Mouse-ear cress), this protein is Amine oxidase [copper-containing] alpha 2, peroxisomal.